A 511-amino-acid polypeptide reads, in one-letter code: Sorting nexin MVP1 (511 aa).

The interval 1 to 36 (MDNYEGSDPWNTSSNAWTKDDDHVVSTTNSEPSLNG) is disordered. Positions 25–36 (VSTTNSEPSLNG) are enriched in polar residues. The region spanning 128–247 (DADIIIIEEI…TFLTVRTDLT (120 aa)) is the PX domain. Positions 172, 174, 198, and 213 each coordinate a 1,2-diacyl-sn-glycero-3-phospho-(1D-myo-inositol-3-phosphate).

Belongs to the sorting nexin family. In terms of assembly, homodimer. Forms an autoinhibited tetramer consisting of 2 homodimers that self-interact, wherein the membrane-interacting BAR surfaces are sequestered and the PX lipid-binding sites are occluded. Interacts with VPS1.

The protein localises to the cytoplasm. It is found in the endosome membrane. Its function is as follows. Required for vacuolar protein sorting. Component of the retromer-mediated endosome-to-Golgi retrograde pathway. Required for efficient cargo export from the endosome, promoting VPS1-mediated fission of retromer-coated tubules that bud from the endosome. This chain is Sorting nexin MVP1 (MVP1), found in Saccharomyces cerevisiae (strain ATCC 204508 / S288c) (Baker's yeast).